Here is a 204-residue protein sequence, read N- to C-terminus: Large ribosomal subunit protein eL15 (204 aa).

The protein belongs to the eukaryotic ribosomal protein eL15 family. In terms of assembly, component of the large ribosomal subunit.

It is found in the cytoplasm. Its function is as follows. Component of the large ribosomal subunit. The ribosome is a large ribonucleoprotein complex responsible for the synthesis of proteins in the cell. This chain is Large ribosomal subunit protein eL15 (rpl15), found in Paramisgurnus dabryanus.